The sequence spans 153 residues: Insulin-like growth factor 1 (153 aa).

Positions 49–77 (GPETLCGAELVDALQFVCGDRGFYFNKPT) are b. 3 disulfides stabilise this stretch: Cys54-Cys96, Cys66-Cys109, and Cys95-Cys100. A c region spans residues 78 to 89 (GYGSSSRRAPQT). The segment at 90 to 110 (GIVDECCFRSCDLRRLEMYCA) is a. Residues 111–118 (PLKPAKSA) are d. The propeptide at 119-153 (RSVRAQRHTDMPKAQKEVHLKNASRGSAGNKNYRM) is e peptide. The tract at residues 120–153 (SVRAQRHTDMPKAQKEVHLKNASRGSAGNKNYRM) is disordered. Over residues 125-138 (RHTDMPKAQKEVHL) the composition is skewed to basic and acidic residues. The span at 142-153 (SRGSAGNKNYRM) shows a compositional bias: polar residues.

Belongs to the insulin family. As to quaternary structure, forms a ternary complex with IGFR1 and ITGAV:ITGB3. Forms a ternary complex with IGFR1 and ITGA6:ITGB4. Forms a ternary complex with IGFBP3 and ALS.

The protein resides in the secreted. In terms of biological role, the insulin-like growth factors, isolated from plasma, are structurally and functionally related to insulin but have a much higher growth-promoting activity. May be a physiological regulator of [1-14C]-2-deoxy-D-glucose (2DG) transport and glycogen synthesis in osteoblasts. Stimulates glucose transport in bone-derived osteoblastic (PyMS) cells and is effective at much lower concentrations than insulin, not only regarding glycogen and DNA synthesis but also with regard to enhancing glucose uptake. May play a role in synapse maturation. Ca(2+)-dependent exocytosis of IGF1 is required for sensory perception of smell in the olfactory bulb. Acts as a ligand for IGF1R. Binds to the alpha subunit of IGF1R, leading to the activation of the intrinsic tyrosine kinase activity which autophosphorylates tyrosine residues in the beta subunit thus initiating a cascade of down-stream signaling events leading to activation of the PI3K-AKT/PKB and the Ras-MAPK pathways. Binds to integrins ITGAV:ITGB3 and ITGA6:ITGB4. Its binding to integrins and subsequent ternary complex formation with integrins and IGFR1 are essential for IGF1 signaling. Induces the phosphorylation and activation of IGFR1, MAPK3/ERK1, MAPK1/ERK2 and AKT1. As part of the MAPK/ERK signaling pathway, acts as a negative regulator of apoptosis in cardiomyocytes via promotion of STUB1/CHIP-mediated ubiquitination and degradation of ICER-type isoforms of CREM. This is Insulin-like growth factor 1 from Ailuropoda melanoleuca (Giant panda).